A 540-amino-acid chain; its full sequence is Chaperonin GroEL (540 aa).

Residues 30 to 33 (TLGP), lysine 51, 87 to 91 (DGTTT), glycine 415, 479 to 481 (NAA), and aspartate 495 each bind ATP.

The protein belongs to the chaperonin (HSP60) family. In terms of assembly, forms a cylinder of 14 subunits composed of two heptameric rings stacked back-to-back. Interacts with the co-chaperonin GroES.

It is found in the cytoplasm. It catalyses the reaction ATP + H2O + a folded polypeptide = ADP + phosphate + an unfolded polypeptide.. In terms of biological role, together with its co-chaperonin GroES, plays an essential role in assisting protein folding. The GroEL-GroES system forms a nano-cage that allows encapsulation of the non-native substrate proteins and provides a physical environment optimized to promote and accelerate protein folding. The protein is Chaperonin GroEL of Raoultella ornithinolytica (Klebsiella ornithinolytica).